Reading from the N-terminus, the 160-residue chain is Putative antiporter subunit mnhE2 (160 aa).

3 helical membrane-spanning segments follow: residues 22–42 (SFQF…IYIL), 61–81 (FLGV…NYIL), and 102–122 (WAIT…VIRI).

This sequence belongs to the CPA3 antiporters (TC 2.A.63) subunit E family. May form a heterooligomeric complex that consists of seven subunits: mnhA2, mnhB2, mnhC2, mnhD2, mnhE2, mnhF2 and mnhG2.

The protein localises to the cell membrane. This chain is Putative antiporter subunit mnhE2 (mnhE2), found in Staphylococcus haemolyticus (strain JCSC1435).